The primary structure comprises 340 residues: Phosphoribosylformylglycinamidine cyclo-ligase (340 aa).

It belongs to the AIR synthase family.

Its subcellular location is the cytoplasm. The enzyme catalyses 2-formamido-N(1)-(5-O-phospho-beta-D-ribosyl)acetamidine + ATP = 5-amino-1-(5-phospho-beta-D-ribosyl)imidazole + ADP + phosphate + H(+). It participates in purine metabolism; IMP biosynthesis via de novo pathway; 5-amino-1-(5-phospho-D-ribosyl)imidazole from N(2)-formyl-N(1)-(5-phospho-D-ribosyl)glycinamide: step 2/2. The chain is Phosphoribosylformylglycinamidine cyclo-ligase from Streptococcus pyogenes serotype M3 (strain ATCC BAA-595 / MGAS315).